Consider the following 785-residue polypeptide: Cadherin-7 (785 aa).

An N-terminal signal peptide occupies residues 1-27 (MKLGKVEFCHFLQLIALFLCFSGMSQA). Positions 28 to 47 (ELSRSRSKPYFQSGRSRTKR) are excised as a propeptide. The Extracellular portion of the chain corresponds to 28 to 607 (ELSRSRSKPY…AYVLPAGLST (580 aa)). 5 consecutive Cadherin domains span residues 49–153 (WVWN…EPKF), 154–262 (LDGP…PPRF), 263–377 (PRRS…PPVF), 378–482 (SSPL…APEF), and 482–599 (FAMD…AEAY). N-linked (GlcNAc...) asparagine glycosylation is found at Asn-449 and Asn-530. Residues 608 to 628 (GALIAILACVLTLLVLILLIV) form a helical membrane-spanning segment. The Cytoplasmic segment spans residues 629–785 (TMRRRKKEPL…YGTGQESLYS (157 aa)).

The protein resides in the cell membrane. Its function is as follows. Cadherins are calcium-dependent cell adhesion proteins. They preferentially interact with themselves in a homophilic manner in connecting cells; cadherins may thus contribute to the sorting of heterogeneous cell types. This is Cadherin-7 (CDH7) from Homo sapiens (Human).